Reading from the N-terminus, the 159-residue chain is Ribosomal RNA large subunit methyltransferase H (159 aa).

S-adenosyl-L-methionine contacts are provided by residues L76, G108, and F127–Y132.

The protein belongs to the RNA methyltransferase RlmH family. In terms of assembly, homodimer.

The protein resides in the cytoplasm. The catalysed reaction is pseudouridine(1915) in 23S rRNA + S-adenosyl-L-methionine = N(3)-methylpseudouridine(1915) in 23S rRNA + S-adenosyl-L-homocysteine + H(+). Functionally, specifically methylates the pseudouridine at position 1915 (m3Psi1915) in 23S rRNA. In Carboxydothermus hydrogenoformans (strain ATCC BAA-161 / DSM 6008 / Z-2901), this protein is Ribosomal RNA large subunit methyltransferase H.